Reading from the N-terminus, the 106-residue chain is Large ribosomal subunit protein uL23 (106 aa).

Belongs to the universal ribosomal protein uL23 family. In terms of assembly, part of the 50S ribosomal subunit. Contacts protein L29, and trigger factor when it is bound to the ribosome.

Functionally, one of the early assembly proteins it binds 23S rRNA. One of the proteins that surrounds the polypeptide exit tunnel on the outside of the ribosome. Forms the main docking site for trigger factor binding to the ribosome. The sequence is that of Large ribosomal subunit protein uL23 from Acinetobacter baumannii (strain SDF).